The chain runs to 187 residues: GTP cyclohydrolase 1 (187 aa).

Zn(2+) is bound by residues Cys-76, His-79, and Cys-148.

This sequence belongs to the GTP cyclohydrolase I family. Homomer.

The enzyme catalyses GTP + H2O = 7,8-dihydroneopterin 3'-triphosphate + formate + H(+). It functions in the pathway cofactor biosynthesis; 7,8-dihydroneopterin triphosphate biosynthesis; 7,8-dihydroneopterin triphosphate from GTP: step 1/1. The sequence is that of GTP cyclohydrolase 1 from Desulforamulus reducens (strain ATCC BAA-1160 / DSM 100696 / MI-1) (Desulfotomaculum reducens).